The following is a 304-amino-acid chain: MCGPDDRCPARWPGPGRAVKCGKGLAAARPGRVERGGAQRGGAGLELHPLLGGRTWRAARDADGCEALGTVAVPFDDDDKIVGGYTCEENSLPYQVSLNSGSHFCGGSLISEQWVVSAAHCYKTRIQVRLGEHNIKVLEGNEQFINAAKIIRHPKYNRDTLDNDIMLIKLSSPAVINARVSTISLPTTPPAAGTECLISGWGNTLSFGADYPDELKCLDAPVLTQAECKASYPGKITNSMFCVGFLEGGKDSCQRDSGGPVVCNGQLQGVVSWGHGCAWKNRPGVYTKVYNYVDWIKDTIAANS.

In terms of domain architecture, Peptidase S1 spans 81 to 301 (IVGGYTCEEN…YVDWIKDTIA (221 aa)). 5 disulfide bridges follow: cysteine 87–cysteine 217, cysteine 105–cysteine 121, cysteine 196–cysteine 263, cysteine 228–cysteine 242, and cysteine 253–cysteine 277. Histidine 120 (charge relay system) is an active-site residue. Residues glutamate 132, asparagine 134, valine 137, glutamate 139, and glutamate 142 each coordinate Ca(2+). Catalysis depends on aspartate 164, which acts as the Charge relay system. Position 211 is a sulfotyrosine (tyrosine 211). Serine 257 functions as the Charge relay system in the catalytic mechanism.

It belongs to the peptidase S1 family. The cofactor is Ca(2+). In terms of tissue distribution, detected in pancreas and pancreatic fluid (at protein level). Expressed in pancreas and brain. Detected in ileum.

It is found in the secreted. The catalysed reaction is Preferential cleavage: Arg-|-Xaa, Lys-|-Xaa.. Not inhibited by Kunitz-type trypsin inhibitors. Digestive protease that cleaves proteins preferentially after an Arg residue and has proteolytic activity toward Kunitz-type trypsin inhibitors. The sequence is that of Trypsin-3 (PRSS3) from Homo sapiens (Human).